The chain runs to 217 residues: tRNA (guanine-N(7)-)-methyltransferase (217 aa).

S-adenosyl-L-methionine is bound by residues Glu44, Glu69, Asn96, and Asp118. Residue Asp118 is part of the active site. Lys122 contributes to the substrate binding site. Residues 124–129 (RHEKRR) are interaction with RNA. Residues Asp154 and 191 to 194 (TEYE) each bind substrate.

This sequence belongs to the class I-like SAM-binding methyltransferase superfamily. TrmB family.

It catalyses the reaction guanosine(46) in tRNA + S-adenosyl-L-methionine = N(7)-methylguanosine(46) in tRNA + S-adenosyl-L-homocysteine. It participates in tRNA modification; N(7)-methylguanine-tRNA biosynthesis. Catalyzes the formation of N(7)-methylguanine at position 46 (m7G46) in tRNA. The chain is tRNA (guanine-N(7)-)-methyltransferase from Geobacillus kaustophilus (strain HTA426).